The following is a 239-amino-acid chain: tRNA (guanine-N(7)-)-methyltransferase (239 aa).

4 residues coordinate S-adenosyl-L-methionine: E69, E94, D121, and D144. Residue D144 is part of the active site. Substrate-binding positions include K148, D180, and 217-220; that span reads TKFE.

This sequence belongs to the class I-like SAM-binding methyltransferase superfamily. TrmB family. Monomer.

It carries out the reaction guanosine(46) in tRNA + S-adenosyl-L-methionine = N(7)-methylguanosine(46) in tRNA + S-adenosyl-L-homocysteine. Its pathway is tRNA modification; N(7)-methylguanine-tRNA biosynthesis. Its function is as follows. Catalyzes the formation of N(7)-methylguanine at position 46 (m7G46) in tRNA. The polypeptide is tRNA (guanine-N(7)-)-methyltransferase (Buchnera aphidicola subsp. Acyrthosiphon pisum (strain 5A)).